Here is a 192-residue protein sequence, read N- to C-terminus: MIRISEAAQSHFKKLLADQPDGTCIRVFVVNPGMANAECGVSYCPPDSVEPDDERLPFNGFDAVVDSGSAPFLEDAAIDFEEQEMGSQLTLKAPNAKARKVADDAPLIERVEYVIQAEINPQLASHGGQVMISEITDDGVAILQFGGGCNGCSMIDVTLKNGIEKELLERFPEEVKGVRDITDHEPGEHSYY.

C149 and C152 together coordinate [4Fe-4S] cluster.

This sequence belongs to the NfuA family. As to quaternary structure, homodimer. [4Fe-4S] cluster is required as a cofactor.

Functionally, involved in iron-sulfur cluster biogenesis. Binds a 4Fe-4S cluster, can transfer this cluster to apoproteins, and thereby intervenes in the maturation of Fe/S proteins. Could also act as a scaffold/chaperone for damaged Fe/S proteins. This is Fe/S biogenesis protein NfuA from Idiomarina loihiensis (strain ATCC BAA-735 / DSM 15497 / L2-TR).